We begin with the raw amino-acid sequence, 315 residues long: Type II restriction enzyme AvaI (315 aa).

It catalyses the reaction Endonucleolytic cleavage of DNA to give specific double-stranded fragments with terminal 5'-phosphates.. Its function is as follows. A P subtype restriction enzyme that recognizes the double-stranded sequence 5'-CYCGRG-3' and cleaves after C-1. In Anabaena variabilis, this protein is Type II restriction enzyme AvaI.